The primary structure comprises 350 residues: Serpentine receptor class beta-12 (350 aa).

The Extracellular segment spans residues 1 to 21 (MSEANLTECELAYQLTYHPFY). Residue asparagine 5 is glycosylated (N-linked (GlcNAc...) asparagine). A helical transmembrane segment spans residues 22-42 (MIAQFWSFFVSLLAMPSLIFF). Topologically, residues 43–57 (MVEKVFKLPFHGNLK) are cytoplasmic. Residues 58 to 78 (FLLVSYFIGTFLFASIICFTF) traverse the membrane as a helical segment. Over 79-103 (GYHFFVPFFVTSNCDLIINATLFKY) the chain is Extracellular. Asparagine 97 is a glycosylation site (N-linked (GlcNAc...) asparagine). The chain crosses the membrane as a helical span at residues 104 to 124 (GHMIALIFMTIPMILPTAFTV). The Cytoplasmic portion of the chain corresponds to 125 to 141 (ERFVALKMAHSYEHVRT). The helical transmembrane segment at 142–162 (LLGPVLVLVVIAIDSMFLYDI) threads the bilayer. Residues 163–189 (YGQEKFDKPFINFILVPATSALQFNSF) are Extracellular-facing. Residues 190 to 210 (LWYMLYLKITNFICNLILLFI) traverse the membrane as a helical segment. At 211–243 (HKILHQSSRYRRKNVSLSVKYEMQEISQSSRFT) the chain is on the cytoplasmic side. A helical membrane pass occupies residues 244–264 (LIVTFTHLLFFGWYVSTILLI). The Extracellular portion of the chain corresponds to 265-282 (RTVGPDFFRGFINYTVMR). N-linked (GlcNAc...) asparagine glycosylation occurs at asparagine 277. Residues 283 to 303 (GVYCATPTYNLVIVFIGFKAL) traverse the membrane as a helical segment. Over 304–350 (NHLNFKRNNKVQSTIQIKSTGQEGAENYDNAISNYWDSVYTMNKSKL) the chain is Cytoplasmic.

Belongs to the nematode receptor-like protein srb family. Expressed throughout the head.

It localises to the cell membrane. The protein resides in the perikaryon. It is found in the cell projection. The protein localises to the dendrite. Its function is as follows. G-protein coupled receptor. Plays a role in the navigational capacity of sperm and promotes the targeting of sperm derived from males to the fertilization site in the uterus of hermaphrodites. The protein is Serpentine receptor class beta-12 of Caenorhabditis elegans.